A 1603-amino-acid polypeptide reads, in one-letter code: Vitellogenin-5 (1603 aa).

The first 15 residues, 1-15 (MKSIIIASLVALAIA), serve as a signal peptide directing secretion. One can recognise a Vitellogenin domain in the interval 24-685 (FSPKSEYVYK…EKNAFLPKEV (662 aa)). The VWFD domain occupies 1306–1475 (ATCKVDQSEV…SYLLKNEECE (170 aa)). 2 disulfides stabilise this stretch: C1308/C1438 and C1330/C1474. The interval 1492–1513 (NREEKKSDYESSSDYESNYDEK) is disordered.

Post-translationally, vitellogenin 5 undergoes little if any processing before being packaged into yolk platelets. As to expression, expressed in the intestine of adult hermaphrodites.

The protein resides in the secreted. Precursor of the egg-yolk proteins that are sources of nutrients during embryonic development. Together with other vitellogenins, may play a role in modulating life-span, acting via induction of autophagy and lysosomal lipolysis. The chain is Vitellogenin-5 (vit-5) from Caenorhabditis elegans.